The chain runs to 1469 residues: MGKRRQGPINKKVDFLPNKLNKYSIRKFTVGTASILLGSTLIFGSSSHEAKAAEEKQVDPITQANQNDSSERSLENTNQPTVNNEAPQMSSTLQAEEGSNAEAPNVPTIKANSDNDTQTQFSEAPTRNDLARKEDIPAVSKNEELQSSQPNTDSKIEPTTSEPVNLNYSSPFMSLLSMPADSSSNNTKNTIDIPPTTVKGRDNYDFYGRVDIQSNPTDLNATNLTRYNYGQPPGTTTAGAVQFKNQVSFDKDFDFNIRVANNRQSNTTGADGWGFMFSKKDGDDFLKNGGILREKGTPSAAGFRIDTGYYNNDPLDKIQKQAGQGYRGYGTFVKNDSQGNTSKVGSGTPSTDFLNYADNTTNDLDGKFHGQKLNNVNLKYNASNQTFTATYAGKTWTATLSELGLSPTDSYNFLVTSSQYGNGNSGTYADGVMRADLDGATLTYTPKAVDGDPITSTKEIPFNKKREFDPNLAPGTEKVVQKGEPGIETTTTPTYVNPNTGEKVGEGTPTTKITKQPVDEIVHYGGEEIKPGHKDEFDPNAPKGSQTTQPGKPGVKNPDTGEVVTPPVDDVTKYGPVDGDPITSTEEIPFDKKREFNPDLKPGEERVKQKGEPGTKTITTPTTKNPLTGEKVGEGEPTEKITKQPVDEITEYGGEEIKPGHKDEFDPNAPKGSQEDVPGKPGVKNPDTGEVVTPPVDDVTKYGPVDGDPITSTEEIPFDKKREFDPNLAPGTEKVVQKGEPGTKTITTPTTKNPLTGEKVGEGEPTEKITKQPVDEIVHYGGEEIKPGHKDEFDPNAPKGSQEDVPGKPGVKNPDTGEVVTPPVDDVTKYGPVDGDPITSTEEIPFDKKREFNPDLKPGEERVKQKGEPGTKTITTPTTKNPLTGEKVGEGEPTEKVTKQPVDEIVHYGGEEIKPGHKDEFDPNAPKGSQEDVPGKPGVKNPDTGEVVTPPVDDVTKYGPVDGDPITSTEEIPFDKKREFDPNLAPGTEKVVQKGEPGTKTITTPTTKNPLTGEKVGEGEPTEKITKQPVDEIVHYGGEEIKPGHKDEFDPNAPKGSQTTQPGKPGVKNPDTGEVVTPPVDDVTKYGPVDGDPITSTEEIPFDKKREFDPNLAPGTEKVVQKGEPGTKTITTPTTKNPLTGEKVGEGEPTEKITKQPVDEIVHYGGEQIPQGHKDEFDPNAPVDSKTEVPGKPGVKNPDTGEVVTPPVDDVTKYGPKVGNPITSTEEIPFDKKRVFNPDLKPGEERVKQKGEPGTKTITTPILVNPITGEKVGEGKSTEKVTKQPVDEIVEYGPTKAEPGKPAEPGKPAEPGKPAEPGKPAEPGTPAEPGKPAEPGKPAEPGKPAEPGKPAEPGKPAEPGTPAEPGKPAEPGKPAEPGKPAEPGTPAEPGKPAEPGTPAEPGKPAEPGTPTQSGAPEQPNRSMHSTDNKNQLPDTGENRQANEGTLVGSLLAIVGSLFIFGRRKKGNEK.

Positions 1–52 are cleaved as a signal peptide; sequence MGKRRQGPINKKVDFLPNKLNKYSIRKFTVGTASILLGSTLIFGSSSHEAKA. Disordered stretches follow at residues 52-164, 486-511, and 528-1443; these read AAEE…SEPV, GIET…TPTT, and EIKP…QANE. Polar residues-rich tracts occupy residues 75 to 94 and 110 to 125; these read ENTN…STLQ and KANS…SEAP. Over residues 129–144 the composition is skewed to basic and acidic residues; sequence DLARKEDIPAVSKNEE. A compositionally biased stretch (polar residues) spans 145-164; that stretch reads LQSSQPNTDSKIEPTTSEPV. G5 domains lie at 446–528, 574–656, 702–784, 830–912, 958–1040, 1086–1168, and 1211–1296; these read PKAV…GGEE, YGPV…GGEE, YGPV…GGEQ, and VTKY…GPTK. Residues 489–500 are compositionally biased toward low complexity; sequence TTTTPTYVNPNT. Composition is skewed to basic and acidic residues over residues 528-537 and 589-613; these read EIKPGHKDEF and PFDK…KGEP. Residues 614 to 629 show a composition bias toward low complexity; it reads GTKTITTPTTKNPLTG. Composition is skewed to basic and acidic residues over residues 631–646 and 655–665; these read KVGE…KQPV and EEIKPGHKDEF. Residues 738-757 show a composition bias toward low complexity; it reads KGEPGTKTITTPTTKNPLTG. 2 stretches are compositionally biased toward basic and acidic residues: residues 759–793 and 845–869; these read KVGE…KDEF and PFDK…KGEP. Low complexity predominate over residues 870 to 885; sequence GTKTITTPTTKNPLTG. Positions 887 to 921 are enriched in basic and acidic residues; it reads KVGEGEPTEKVTKQPVDEIVHYGGEEIKPGHKDEF. Low complexity predominate over residues 994–1013; sequence KGEPGTKTITTPTTKNPLTG. Over residues 1015–1049 the composition is skewed to basic and acidic residues; that stretch reads KVGEGEPTEKITKQPVDEIVHYGGEEIKPGHKDEF. Low complexity predominate over residues 1122 to 1141; it reads KGEPGTKTITTPTTKNPLTG. 3 stretches are compositionally biased toward basic and acidic residues: residues 1143-1162, 1229-1253, and 1271-1286; these read KVGE…DEIV, PFDK…KGEP, and KVGE…KQPV. Residues 1409–1443 show a composition bias toward polar residues; that stretch reads TPTQSGAPEQPNRSMHSTDNKNQLPDTGENRQANE. Positions 1432-1436 match the LPXTG sorting signal motif; the sequence is LPDTG. Threonine 1435 is subject to Pentaglycyl murein peptidoglycan amidated threonine. The propeptide at 1436 to 1469 is removed by sortase; it reads GENRQANEGTLVGSLLAIVGSLFIFGRRKKGNEK.

The protein resides in the secreted. It is found in the cell wall. This chain is Accumulation-associated protein, found in Staphylococcus epidermidis (strain ATCC 12228 / FDA PCI 1200).